The primary structure comprises 146 residues: Single-stranded DNA-binding protein, mitochondrial (146 aa).

The transit peptide at Met1 to Gly22 directs the protein to the mitochondrion. In terms of domain architecture, SSB spans Val38 to Arg142.

In terms of assembly, homotetramer. In terms of tissue distribution, uniformly distributed in the early embryo. High levels detected in the anterior and posterior midgut primordia of stage 12 embryos. In larvae, high levels were detected in proliferating tissues including the CNS and digestive tract. In adults, highly expressed in the CNS, digestive tract and ovary.

Its subcellular location is the mitochondrion. Functionally, binds preferentially and cooperatively to pyrimidine rich single-stranded DNA (ss-DNA). Required to maintain the copy number of mitochondrial DNA (mtDNA) and plays crucial roles during mtDNA replication that stimulate activity of the gamma complex polymerase PolG1/tam at the replication fork. Promotes PolG1 activity largely by organizing the template DNA and eliminating secondary structures to favor ss-DNA conformations that facilitate PolG1 activity. This chain is Single-stranded DNA-binding protein, mitochondrial (mtSSB), found in Drosophila melanogaster (Fruit fly).